The chain runs to 959 residues: Isoleucine--tRNA ligase (959 aa).

A 'HIGH' region motif is present at residues 66-76 (PYANGDIHIGH). Residue glutamate 592 participates in L-isoleucyl-5'-AMP binding. The 'KMSKS' region motif lies at 633–637 (KMSKS). An ATP-binding site is contributed by lysine 636. Positions 922, 925, 942, and 945 each coordinate Zn(2+).

The protein belongs to the class-I aminoacyl-tRNA synthetase family. IleS type 1 subfamily. In terms of assembly, monomer. It depends on Zn(2+) as a cofactor.

It localises to the cytoplasm. It carries out the reaction tRNA(Ile) + L-isoleucine + ATP = L-isoleucyl-tRNA(Ile) + AMP + diphosphate. In terms of biological role, catalyzes the attachment of isoleucine to tRNA(Ile). As IleRS can inadvertently accommodate and process structurally similar amino acids such as valine, to avoid such errors it has two additional distinct tRNA(Ile)-dependent editing activities. One activity is designated as 'pretransfer' editing and involves the hydrolysis of activated Val-AMP. The other activity is designated 'posttransfer' editing and involves deacylation of mischarged Val-tRNA(Ile). The polypeptide is Isoleucine--tRNA ligase (Cupriavidus metallidurans (strain ATCC 43123 / DSM 2839 / NBRC 102507 / CH34) (Ralstonia metallidurans)).